The sequence spans 318 residues: MTRHIILDCDPGHDDAIALILALAHPNLVPLAVTTSAGNQTPDKTLNNALRILTLLNRGDIPVAGGATKPLTRELIIADNVHGETGLDGPALPEPSFSPQAITAVELMAQQIRQSTQPVTLVPTGPLTNIALLLASHSELHPKIERIVLMGGAAGVGNWTPAAEFNIFVDPEAADIVFKSGIPITMCGLDVTHQAQIMDEDIERIRAIPNPIAQCVAELLDFFMIYHRDPKWGFIGAPLHDPCTIAWLLKPELFEAQDCWVGIETQSELTLGMTVVDRYQLTGKTANATVLFGLDRLGFVDLLVDSLRVYDPTYLNRR.

Residue His-240 is part of the active site.

This sequence belongs to the IUNH family. RihA subfamily.

In terms of biological role, hydrolyzes cytidine or uridine to ribose and cytosine or uracil, respectively. The protein is Pyrimidine-specific ribonucleoside hydrolase RihA of Shewanella baltica (strain OS185).